Here is a 227-residue protein sequence, read N- to C-terminus: Ubiquitin domain-containing protein 1 (227 aa).

Positions 1-42 (MGNCVGRQRRERPAAPGHPRKRAGRNEPLKKERLKWKSDYPM) are disordered. A compositionally biased stretch (basic and acidic residues) spans 24-38 (GRNEPLKKERLKWKS). One can recognise a Ubiquitin-like domain in the interval 149 to 224 (FPLKVRLSTG…IQVIINQPPP (76 aa)).

In terms of assembly, interacts with UBTD1.

Functionally, may be involved in the regulation of cellular senescence through a positive feedback loop with TP53. Is a TP53 downstream target gene that increases the stability of TP53 protein by promoting the ubiquitination and degradation of MDM2. The chain is Ubiquitin domain-containing protein 1 (Ubtd1) from Mus musculus (Mouse).